The sequence spans 226 residues: NADH-ubiquinone oxidoreductase chain 6 (226 aa).

5 helical membrane-spanning segments follow: residues 2 to 22 (STLG…LVIL), 28 to 48 (IYSI…LLTV), 56 to 76 (IYIL…VMMI), 90 to 110 (YNIY…ILIT), and 169 to 189 (IWFI…IYIT).

The protein belongs to the complex I subunit 6 family.

Its subcellular location is the mitochondrion membrane. The catalysed reaction is a ubiquinone + NADH + 5 H(+)(in) = a ubiquinol + NAD(+) + 4 H(+)(out). Functionally, core subunit of the mitochondrial membrane respiratory chain NADH dehydrogenase (Complex I) that is believed to belong to the minimal assembly required for catalysis. Complex I functions in the transfer of electrons from NADH to the respiratory chain. The immediate electron acceptor for the enzyme is believed to be ubiquinone. This is NADH-ubiquinone oxidoreductase chain 6 (nad6) from Dictyostelium discoideum (Social amoeba).